The following is a 381-amino-acid chain: E3 ubiquitin-protein ligase KCMF1 (381 aa).

Ser2 bears the N-acetylserine mark. Ser2 carries the phosphoserine modification. Residues 4–60 (HEGVSCDACLKGNFRGRRYKCLICYDYDLCASCYESGATTTRHTTDHPMQCILTRVD) form a ZZ-type zinc finger. Zn(2+) is bound by residues Cys9, Cys12, Cys24, Cys27, Cys33, Cys36, His46, and His50. The segment at 78-101 (FTCPYCGKMGYTETSLQEHVTSEH) adopts a C2H2-type zinc-finger fold. Residues 154–193 (MFHPGRGLGGPRARRSNMHFTSSSTGGLSSSQSSYSPSNR) are disordered. Phosphoserine occurs at positions 169, 189, and 212. Residues 175 to 191 (SSSTGGLSSSQSSYSPS) are compositionally biased toward low complexity. A coiled-coil region spans residues 225–257 (SQLQQLQMQLQLERQHAQAARQQLETARNATRR). Positions 294–314 (TRLNDPKMSETERQSMESERA) are disordered. Residues 297–314 (NDPKMSETERQSMESERA) show a composition bias toward basic and acidic residues. Residues Ser335 and Ser336 each carry the phosphoserine modification.

Belongs to the KCMF1 family. As to quaternary structure, component of the SIFI complex, composed of KCMF1, UBR4 and calmodulin (CALM1, CALM2 or CALM3). As to expression, spleen, small intestine, ovary, peripheral blood, lung, kidney and pancreas. Expressed at low levels in the thymus, prostate, testis, colon, heart, brain, placenta and liver.

The protein localises to the cytoplasm. Its subcellular location is the late endosome. It is found in the lysosome. It carries out the reaction S-ubiquitinyl-[E2 ubiquitin-conjugating enzyme]-L-cysteine + [acceptor protein]-L-lysine = [E2 ubiquitin-conjugating enzyme]-L-cysteine + N(6)-ubiquitinyl-[acceptor protein]-L-lysine.. It functions in the pathway protein modification; protein ubiquitination. Its function is as follows. E3 ubiquitin-protein ligase which accepts ubiquitin from an E2 ubiquitin-conjugating enzyme and then transfers it to targeted substrates, promoting their degradation by the proteasome. Together with UBR4, component of the N-end rule pathway: ubiquitinates proteins bearing specific N-terminal residues that are destabilizing according to the N-end rule, leading to their degradation. Does not ubiquitinate proteins that are acetylated at the N-terminus. Together with UBR4, part of a protein quality control pathway that catalyzes ubiquitination and degradation of proteins that have been oxidized in response to reactive oxygen species (ROS): recognizes proteins with an Arg-CysO3(H) degron at the N-terminus, and mediates assembly of heterotypic 'Lys-63'-/'Lys-27'-linked branched ubiquitin chains on oxidized proteins, leading to their degradation by autophagy. Catalytic component of the SIFI complex, a multiprotein complex required to inhibit the mitochondrial stress response after a specific stress event has been resolved: ubiquitinates and degrades (1) components of the HRI-mediated signaling of the integrated stress response, such as DELE1 and EIF2AK1/HRI, as well as (2) unimported mitochondrial precursors. Within the SIFI complex, UBR4 initiates ubiquitin chain that are further elongated or branched by KCMF1. The polypeptide is E3 ubiquitin-protein ligase KCMF1 (Homo sapiens (Human)).